The sequence spans 1666 residues: Latent-transforming growth factor beta-binding protein 4 (1666 aa).

The signal sequence occupies residues 1–24; that stretch reads MRRPGLGGPCPLLLLLLLPAATSA. The region spanning 148–180 is the EGF-like 1 domain; sequence ARVLCPLICHNGGVCVKPDRCLCPPDFAGKFCQ. 6 cysteine pairs are disulfide-bonded: C152-C162, C156-C168, C170-C179, C288-C310, C297-C323, and C311-C326. The TB 1 domain occupies 286–338; it reads GYCFRELRGSECASPLPGLRTQEVCCRGEGLAWGVHDCHPCAEHLRNSNQVSG. N-linked (GlcNAc...) asparagine glycosylation occurs at N351. Residues 356–396 form the EGF-like 2; calcium-binding domain; it reads DVDECATGGRCQHGECANTRGGYTCVCPDGFLLDSSRSSCI. 7 cysteine pairs are disulfide-bonded: C360-C371, C366-C380, C382-C395, C408-C430, C417-C443, C431-C446, and C432-C458. One can recognise a TB 2 domain in the interval 406 to 458; that stretch reads GPCYRVLHDGGCSLPILRNITKQICCCSRVGKAWGRGCQLCPPYGSEGFREIC. N424 is a glycosylation site (N-linked (GlcNAc...) asparagine). The segment at 473–590 is disordered; the sequence is YNTRPLNQDP…EIPESGPSSS (118 aa). Pro residues predominate over residues 491-502; that stretch reads RVPPATPRPPTG. Positions 521-561 are enriched in basic and acidic residues; sequence PRPRPEPRPRPESRPRPEPRPRPEPRPQPESQPRPESRPRP. Pro residues predominate over residues 562–573; sequence ESQPWPEFPLPS. The span at 579-590 shows a compositional bias: low complexity; it reads GPEIPESGPSSS. One can recognise an EGF-like 3 domain in the interval 588-629; the sequence is SSSMCQRNPQVCGPGRCVPRPSGYTCACDPGFRLGPQGTRCI. 30 cysteine pairs are disulfide-bonded: C592–C604, C599–C613, C615–C628, C634–C646, C641–C655, C657–C670, C676–C688, C683–C697, C699–C712, C718–C730, C725–C739, C741–C750, C757–C769, C764–C778, C780–C793, C799–C811, C806–C820, C822–C835, C881–C893, C887–C902, C904–C918, C924–C936, C930–C945, C947–C960, C966–C977, C972–C986, C988–C1001, C1095–C1107, C1101–C1116, and C1118–C1131. An EGF-like 4; calcium-binding domain is found at 630 to 671; sequence DIDECRRVPTPCAPGRCENTPGSFRCVCGTGFQAGPRATECL. Positions 672–713 constitute an EGF-like 5; calcium-binding domain; the sequence is DVDECRRVPPPCDRGRCENTPGSFLCVCPAGYQAAPHGASCQ. Residues 714–751 form the EGF-like 6; calcium-binding domain; it reads DVDECTQSPGLCGRGVCENLPGSFRCVCPAGFRGSACE. One can recognise an EGF-like 7; calcium-binding domain in the interval 753–794; it reads DVDECAQQPPPCGPGRCDNTAGSFHCACPAGFRSRGPGAPCQ. Residues 795-836 enclose the EGF-like 8; calcium-binding domain; that stretch reads DVDECSRSPSPCAYGRCENTEGSFKCVCPTGFQPNAAGSECE. Positions 877 to 919 constitute an EGF-like 9; calcium-binding domain; the sequence is DVDECSSGTPCGLHGQCTNTKGSFHCSCSTGYRAPSGQPGPCA. Residues 920–961 enclose the EGF-like 10; calcium-binding domain; the sequence is DINECLEGDFCFPHGECLNTDGSFTCTCAPGYRPGPRGASCL. Residues 962–1002 enclose the EGF-like 11; calcium-binding domain; that stretch reads DVDECSEEDLCQSGICTNTDGSFECICPPGHRAGPDLASCL. One can recognise an EGF-like 12; calcium-binding domain in the interval 1091–1132; the sequence is DVDECRNRSFCGAHAMCQNLPGSFQCVCDQGYEGARDGRHCV. A glycan (N-linked (GlcNAc...) asparagine) is linked at N1097. The segment at 1171-1221 is disordered; that stretch reads TGRCVPPRAPAGTFPGSQPQAPASPSLPARPPAPPPPRRPSPPRQGPVSSG. The span at 1185-1197 shows a compositional bias: low complexity; it reads PGSQPQAPASPSL. Positions 1198 to 1215 are enriched in pro residues; it reads PARPPAPPPPRRPSPPRQ. Residues 1223-1277 enclose the TB 3 domain; the sequence is RECYFDTAAPDACDNILARNVTWQECCCTVGEGWGSGCRIQQCPGTETAEYQSLC. 10 disulfide bridges follow: C1225/C1248, C1235/C1260, C1249/C1265, C1250/C1277, C1299/C1312, C1307/C1321, C1323/C1336, C1342/C1354, C1349/C1363, and C1365/C1378. Residue N1242 is glycosylated (N-linked (GlcNAc...) asparagine). One can recognise an EGF-like 13; calcium-binding domain in the interval 1295–1337; it reads DVDECQLFQDQVCKSGVCVNTAPGYSCYCSNGFYYHAHRLECV. An EGF-like 14; calcium-binding domain is found at 1338 to 1379; it reads DNDECADEEPACEGGRCVNTVGSYHCTCEPPLVLDGSRRRCV. Residue N1381 is glycosylated (N-linked (GlcNAc...) asparagine). The TB 4 domain occupies 1391-1444; sequence GVCWQEVGPDLVCSRPRLDRQATYTECCCLYGEAWGMDCALCPAQDSDDFEALC. Disulfide bonds link C1393–C1417, C1403–C1429, C1418–C1432, and C1419–C1444. A compositionally biased stretch (pro residues) spans 1488–1500; the sequence is VLPYDPYPPPPGP. Residues 1488 to 1566 are disordered; it reads VLPYDPYPPP…SSERGSYTGA (79 aa). Residue T1564 is modified to Phosphothreonine. EGF-like domains follow at residues 1575 to 1615 and 1616 to 1660; these read EAEE…MSCV and DVNE…HHCA. Disulfide bonds link C1579-C1590, C1585-C1599, C1601-C1614, C1620-C1635, C1630-C1644, and C1646-C1659.

It belongs to the LTBP family. Forms part of the large latent transforming growth factor beta precursor complex; removal is essential for activation of complex. Interacts with LTBP1 and TGFB1. Interacts with EFEMP2; this interaction promotes fibrillar deposition of EFEMP2. Post-translationally, contains hydroxylated asparagine residues.

The protein resides in the secreted. It localises to the extracellular space. It is found in the extracellular matrix. Key regulator of transforming growth factor beta (TGFB1, TGFB2 and TGFB3) that controls TGF-beta activation by maintaining it in a latent state during storage in extracellular space. Associates specifically via disulfide bonds with the Latency-associated peptide (LAP), which is the regulatory chain of TGF-beta, and regulates integrin-dependent activation of TGF-beta. In Mus musculus (Mouse), this protein is Latent-transforming growth factor beta-binding protein 4 (Ltbp4).